A 297-amino-acid chain; its full sequence is Thiosulfate sulfurtransferase (297 aa).

The residue at position 14 (Lys14) is an N6-acetyllysine; alternate. Position 14 is an N6-succinyllysine; alternate (Lys14). The region spanning 25–143 (VGPSLRVLDA…WLKEGHPVTS (119 aa)) is the Rhodanese 1 domain. Ser35 carries O-linked (GlcNAc) serine glycosylation. Ser38 carries the post-translational modification Phosphoserine. Position 136 is an N6-acetyllysine; alternate (Lys136). Residue Lys136 is modified to N6-succinyllysine; alternate. A hinge region spans residues 144-159 (EPSRPEPAVFKATLNR). At Lys163 the chain carries N6-acetyllysine. One can recognise a Rhodanese 2 domain in the interval 173–288 (QSKRFQLVDS…WFRRAPPETR (116 aa)). Lys175 is modified (N6-acetyllysine; alternate). Residue Lys175 is modified to N6-succinyllysine; alternate. Arg187 contacts substrate. At Lys224 the chain carries N6-acetyllysine; alternate. Lys224 is modified (N6-succinyllysine; alternate). An N6-acetyllysine modification is found at Lys236. Lys237 carries the N6-acetyllysine; alternate modification. At Lys237 the chain carries N6-succinyllysine; alternate. The active-site Cysteine persulfide intermediate is Cys248. Residue Lys250 coordinates substrate.

Monomer. As to expression, expressed in numerous tissues.

The protein localises to the mitochondrion matrix. The enzyme catalyses thiosulfate + hydrogen cyanide = thiocyanate + sulfite + 2 H(+). Its function is as follows. Together with MRPL18, acts as a mitochondrial import factor for the cytosolic 5S rRNA. Only the nascent unfolded cytoplasmic form is able to bind to the 5S rRNA. Involved in the formation of iron-sulfur complexes, cyanide detoxification or modification of sulfur-containing enzymes. Other thiol compounds, besides cyanide, can act as sulfur ion acceptors. Also has weak mercaptopyruvate sulfurtransferase (MST) activity. The sequence is that of Thiosulfate sulfurtransferase (Tst) from Rattus norvegicus (Rat).